We begin with the raw amino-acid sequence, 744 residues long: Tripartite motif-containing protein 2 (744 aa).

Ser10 carries the post-translational modification Phosphoserine. Residues 23-64 (CSICLERYKNPKVLPCLHTFCERCLQNYIPAHSLTLSCPVCR) form an RING-type zinc finger. Residues 113–154 (GKPLSCPNHDGNVMEFYCQSCETAMCRECTEGEHAEHPTVPL) form a B box-type zinc finger. 4 residues coordinate Zn(2+): Cys118, His121, Cys141, and His146. One copy of the Filamin repeat lies at 320-421 (TTNAVASETV…IRGSPFKLKV (102 aa)). Thr371 is subject to Phosphothreonine. Ser375, Ser424, and Ser428 each carry phosphoserine. A disordered region spans residues 432 to 462 (EGVKRRVKSPGSGHVKQKAVKRPASMYSTGK). 6 NHL repeats span residues 473 to 516 (IFRV…FSND), 520 to 563 (KSRF…FSND), 564 to 605 (GKFK…FQPN), 609 to 652 (VTRF…FNQE), 656 to 699 (MLKF…FDGS), and 700 to 743 (GSFL…YRYL).

It belongs to the TRIM/RBCC family. Forms homooligomers. Interacts with TRIM3; this interaction reduces TRIM2 activity. Interacts with myosin V; myosin V may not be a substrate for ubiquitination. Interacts with NEFL. Interacts with phosphorylated BCL2L11. Interacts with SIRPA. Post-translationally, RING-type zinc finger-dependent and UBE2D1-dependent autoubiquitination.

The catalysed reaction is S-ubiquitinyl-[E2 ubiquitin-conjugating enzyme]-L-cysteine + [acceptor protein]-L-lysine = [E2 ubiquitin-conjugating enzyme]-L-cysteine + N(6)-ubiquitinyl-[acceptor protein]-L-lysine.. It participates in protein modification; protein ubiquitination. UBE2D1-dependent E3 ubiquitin-protein ligase that mediates the ubiquitination of NEFL and of phosphorylated BCL2L11. Plays a neuroprotective function. May play a role in neuronal rapid ischemic tolerance. Plays a role in antiviral immunity and limits New World arenavirus infection independently of its ubiquitin ligase activity. The sequence is that of Tripartite motif-containing protein 2 (Trim2) from Rattus norvegicus (Rat).